We begin with the raw amino-acid sequence, 146 residues long: Hemoglobin subunit beta-2 (146 aa).

Positions 2 to 146 constitute a Globin domain; that stretch reads HWTAEEKQLI…VAHALARRYH (145 aa). Heme b-binding residues include His63 and His92.

This sequence belongs to the globin family. As to quaternary structure, heterotetramer of two alpha chains and two beta chains. Red blood cells.

Its function is as follows. Involved in oxygen transport from the lung to the various peripheral tissues. In Iguana iguana (Common iguana), this protein is Hemoglobin subunit beta-2.